Consider the following 196-residue polypeptide: MQYIKMVICGDGAVGKTSLLIAFASGEFPRDYQPTVFDNFSTLYMFQNKAYNLGLFDTAGQEDFDRLRPLGYNDTDLFLICYSVINPPSYANVYDKWYSEIKLYTGSEIPLILVGTQNDLRHDKATRETLALKQQAPISYEEGMMMRKRIGAKAFTECSVVSGKNVKQVFEEAIKVYQDRQIEISKSKEKNNCIIL.

Position 10 to 17 (10 to 17 (GDGAVGKT)) interacts with GTP. An Effector region motif is present at residues 32–40 (YQPTVFDNF). Residues 57-61 (DTAGQ) and 116-119 (TQND) each bind GTP. Cysteine methyl ester is present on Cys193. A lipid anchor (S-geranylgeranyl cysteine) is attached at Cys193. Positions 194–196 (IIL) are cleaved as a propeptide — removed in mature form.

The protein belongs to the small GTPase superfamily. Rho family.

The protein resides in the cell membrane. This is Rho-related protein racL (racL) from Dictyostelium discoideum (Social amoeba).